Reading from the N-terminus, the 471-residue chain is Uronate isomerase (471 aa).

It belongs to the metallo-dependent hydrolases superfamily. Uronate isomerase family.

The catalysed reaction is D-glucuronate = D-fructuronate. It catalyses the reaction aldehydo-D-galacturonate = keto-D-tagaturonate. The protein operates within carbohydrate metabolism; pentose and glucuronate interconversion. The protein is Uronate isomerase of Cellvibrio japonicus (strain Ueda107) (Pseudomonas fluorescens subsp. cellulosa).